The sequence spans 588 residues: L-fucose isomerase (588 aa).

Catalysis depends on proton acceptor residues Glu-335 and Asp-359. Positions 335, 359, and 525 each coordinate Mn(2+).

Belongs to the L-fucose isomerase family. Mn(2+) is required as a cofactor.

The protein resides in the cytoplasm. It carries out the reaction L-fucose = L-fuculose. It functions in the pathway carbohydrate degradation; L-fucose degradation; L-lactaldehyde and glycerone phosphate from L-fucose: step 1/3. In terms of biological role, converts the aldose L-fucose into the corresponding ketose L-fuculose. This is L-fucose isomerase from Streptococcus pneumoniae serotype 2 (strain D39 / NCTC 7466).